The following is a 470-amino-acid chain: mRNA export factor ICP27 homolog (470 aa).

Disordered regions lie at residues 1 to 31 and 62 to 204; these read MALS…TGGD and VGDP…DRLN. Residues 71–85 show a composition bias toward polar residues; that stretch reads VSFSASPQRAQPSNP. 2 stretches are compositionally biased toward basic residues: residues 94 to 107 and 178 to 187; these read HGRR…RRNN and RVHRNRRRGN. Zn(2+) is bound by residues cysteine 359, histidine 437, cysteine 441, and cysteine 446. The segment at 359–446 adopts a CHC2-type zinc-finger fold; it reads CYLSSSGSPT…HKRRCKADTC (88 aa).

Belongs to the HHV-1 ICP27 protein family. As to quaternary structure, homodimer. Homodimerization is required for transactivation. Associates in a complex with RNA, and host export factors NXF1/TAP and ALYREF; these interactions allow nuclear export of viral transcripts. Interacts with three host shuttling SR proteins SRSF1, SRSF3 and SRSF7. Interacts with host SRPK1. Interacts with IE62; this interaction enhances IE62 transactivation.

It localises to the host cytoplasm. The protein resides in the host nucleus. Its function is as follows. Multifunctional regulator of the expression of viral genes that mediates nuclear export of viral intronless mRNAs. This immediate early (EI) protein promotes the nuclear export of viral intronless mRNAs by interacting with mRNAs and host NXF1/TAP. This is mRNA export factor ICP27 homolog from Equine herpesvirus 1 (strain Ab4p) (EHV-1).